The following is a 539-amino-acid chain: MHRKSLRRASATVPSAPYRKQIISNAHNKPSLFSKIKTFFTQKDSARVSPRNNVANKQPRNESFNRRISSMPGGYFHSEISPDSTVNRSVVVSAVGEARNDIENKEEEYDETHETNISNAKLANFFSKKGNEPLSEIEIEGVMSLLQKSSKSMITSEGEQKSAEGNNIDQSLILKESGSTPISISNAPTFNPKYDTSNASMNTTLGSIGSRKYSFNYSSLPSPYKTTVYRYSAAKKIPDTYTANTSAQSIASAKSVRSGVSKSAPSKKISNTAAALVSLLDENDSKKNNAASELANPYSSYVSQIRKHKRVSPNAAPRQEISEEETTVKPLFQNVPEQGEEPMKQLNATKISPSAPSKDSFTKYKPARSSSLRSNVVVAETSPEKKDGGDKPPSSAFNFSFNTSRNVEPTENAYKSENAPSASSKEFNFTNLQAKPLVGKPKTELTKGDSTPVQPDLSVTPQKSSSKGFVFNSVQKKSRSNLSQENDNEGKHISASIDNDFSEEKAEEFDFNVPVVSKQLGNGLVDENKVEAFKSLYTF.

Phosphoserine is present on residues Ser-10, Ser-49, Ser-81, and Ser-89. Residues 44 to 80 (DSARVSPRNNVANKQPRNESFNRRISSMPGGYFHSEI) are disordered. Residues 91–118 (VVSAVGEARNDIENKEEEYDETHETNIS) are a coiled coil. Ser-162, Ser-171, Ser-214, and Ser-222 each carry phosphoserine. Polar residues-rich tracts occupy residues 242–252 (TANTSAQSIAS) and 258–267 (SGVSKSAPSK). Disordered stretches follow at residues 242–267 (TANT…APSK), 305–329 (IRKH…TTVK), and 347–493 (NATK…GKHI). Residues 347 to 359 (NATKISPSAPSKD) show a composition bias toward polar residues. Phosphoserine occurs at positions 352, 360, 374, and 382. Polar residues-rich tracts occupy residues 395 to 433 (SAFN…TNLQ) and 448 to 485 (GDST…LSQE). FXF repeat units lie at residues 399 to 401 (FSF) and 427 to 429 (FNF). Thr-460 is modified (phosphothreonine). Residues 469–471 (FVF) form an FXF 3 repeat. 2 positions are modified to phosphoserine: Ser-480 and Ser-483. The FXF 4 repeat unit spans residues 509-511 (FDF).

As to quaternary structure, component of the nuclear pore complex (NPC). NPC constitutes the exclusive means of nucleocytoplasmic transport. NPCs allow the passive diffusion of ions and small molecules and the active, nuclear transport receptor-mediated bidirectional transport of macromolecules such as proteins, RNAs, ribonucleoparticles (RNPs), and ribosomal subunits across the nuclear envelope. Due to its 8-fold rotational symmetry, all subunits are present with 8 copies or multiples thereof. Binds to NUP1 and NUP2 forming the nuclear basket and the distal ring. The interaction with NUP2 is GSP1-GTP-dependent. Interacts through its FG repeats with karyopherins, such as KAP123 and KAP95-SRP1 (KAP60). Also interacts with GSP1-GTP and SRM1 (PRP20), where NUP60 reduces SRM1 activity, thus inhibiting GSP1 guanine nucleotide dissociation. In terms of processing, phosphorylated by CDC28.

The protein resides in the nucleus. Its subcellular location is the nuclear pore complex. It localises to the nucleus membrane. Its function is as follows. Functions as a component of the nuclear pore complex (NPC). NPC components, collectively referred to as nucleoporins (NUPs), can play the role of both NPC structural components and of docking or interaction partners for transiently associated nuclear transport factors. Active directional transport is assured by both, a Phe-Gly (FG) repeat affinity gradient for these transport factors across the NPC and a transport cofactor concentration gradient across the nuclear envelope (GSP1 and GSP2 GTPases associated predominantly with GTP in the nucleus, with GDP in the cytoplasm). The sequence is that of Nucleoporin NUP60 (NUP60) from Saccharomyces cerevisiae (strain ATCC 204508 / S288c) (Baker's yeast).